Consider the following 1616-residue polypeptide: Vitellogenin-1 (1616 aa).

The N-terminal stretch at 1-19 (MRSIIIASIVALAIAFSPA) is a signal peptide. The 666-residue stretch at 24–689 (FEPKIDYHYK…EKNSFLLKDL (666 aa)) folds into the Vitellogenin domain. The N-linked (GlcNAc...) asparagine glycan is linked to Asn-1270. The region spanning 1310 to 1479 (SVCKVQKNQI…SYLLKNEECE (170 aa)) is the VWFD domain. 2 disulfide bridges follow: Cys-1312–Cys-1442 and Cys-1334–Cys-1478. A compositionally biased stretch (acidic residues) spans 1505 to 1514 (SFEETYDYEQ). Residues 1505–1531 (SFEETYDYEQENTNKKQKNQRSQKKSD) form a disordered region.

Expressed in the intestine of adult hermaphrodites.

It is found in the secreted. Precursor of the egg-yolk proteins that are sources of nutrients during embryonic development. Together with other vitellogenins, may play a role in modulating life-span, acting via induction of autophagy and lysosomal lipolysis. This chain is Vitellogenin-1 (vit-1), found in Caenorhabditis elegans.